The primary structure comprises 203 residues: Glycerol-3-phosphate acyltransferase (203 aa).

Residues methionine 1–alanine 3 lie on the Periplasmic side of the membrane. The helical transmembrane segment at isoleucine 4–valine 24 threads the bilayer. At cysteine 25 to lysine 52 the chain is on the cytoplasmic side. A helical transmembrane segment spans residues glycine 53–alanine 73. The Periplasmic segment spans residues tyrosine 74–proline 80. Residues phenylalanine 81 to glycine 101 traverse the membrane as a helical segment. Topologically, residues phenylalanine 102–alanine 111 are cytoplasmic. A helical transmembrane segment spans residues phenylalanine 112–leucine 132. At threonine 133–serine 137 the chain is on the periplasmic side. Residues glycine 138 to phenylalanine 158 form a helical membrane-spanning segment. Residues lysine 159 to aspartate 203 are Cytoplasmic-facing.

Belongs to the PlsY family. Probably interacts with PlsX.

Its subcellular location is the cell inner membrane. The enzyme catalyses sn-glycerol 3-phosphate + an acyl-CoA = a 1-acyl-sn-glycero-3-phosphate + CoA. The catalysed reaction is a fatty acyl-[ACP] + sn-glycerol 3-phosphate = a 1-acyl-sn-glycero-3-phosphate + holo-[ACP]. The protein operates within lipid metabolism; phospholipid metabolism. Its function is as follows. Catalyzes the transfer of an acyl group from acyl-ACP to glycerol-3-phosphate (G3P) to form lysophosphatidic acid (LPA). This enzyme can also utilize acyl-CoA as fatty acyl donor, but not acyl-PO(4). This chain is Glycerol-3-phosphate acyltransferase, found in Salmonella agona (strain SL483).